The primary structure comprises 536 residues: Caspase recruitment domain-containing protein 9 (536 aa).

Ser2 is subject to Phosphoserine. Zn(2+) contacts are provided by Asp3, Cys10, and His73. Positions 6-98 (NDDECWSALE…QLYRKVTGKE (93 aa)) constitute a CARD domain. The interval 99–116 (PARVFSMIIDASGESGLT) is linker. 2 coiled-coil regions span residues 117–277 (QLLM…HRNS) and 303–420 (SLRK…QLDM). Residue Lys125 forms a Glycyl lysine isopeptide (Lys-Gly) (interchain with G-Cter in ubiquitin) linkage. Residue Thr231 is modified to Phosphothreonine. Ser277 bears the Phosphoserine mark. Ser424, Ser425, Ser431, Ser451, Ser461, Ser483, and Ser498 each carry phosphoserine. A disordered region spans residues 425 to 451 (SDLEDSSPRNSQELSLPQDLEEDAQLS). The interval 472–536 (KHLSQTHDTV…GSDNTDTEGS (65 aa)) is disordered. Residues 487–502 (PPEKERRRLKESFENY) show a composition bias toward basic and acidic residues. A phosphothreonine; by CK2 mark is found at Thr531 and Thr533.

As to quaternary structure, monomer. Homodimer; homodimerization is mediated by the CARD domain which forms an extensive interaction with the adjacent linker and coiled-coil regions; leads to an autoinhibited state. Homomultimer; polymerizes following activation, forming a nucleating helical template that seeds BCL10-filament formation via a CARD-CARD interaction. Interacts (via CARD domain) with BCL10 (via CARD domain); interaction takes place following CARD9 activation and polymerization, leading to the formation of a filamentous CBM complex assembly. Component of a CBM complex (CARD9-BCL10, MALT1), composed of CARD9, BCL10 and MALT1. Interacts with RASGRF1. Interacts with NOD2 (via NACHT domain); interaction is direct. Interacts with RIPK2. Interacts with VHL; without leading to protein degradation. Phosphorylated at Thr-231 by PRKCD downstream of C-type lectin receptors activation: phosphorylation promotes interaction with BCL10, followed by activation of NF-kappa-B and MAP kinase p38 pathways. Phosphorylated at Thr-531 and Thr-533 by CK2 following interaction with VHL, leading to inhibit the ability to activate NF-kappa-B. Post-translationally, ubiquitinated at Lys-125 via 'Lys-27'-linked ubiquitin by TRIM62 downstream of C-type lectin receptors activation; leading to CARD9 activation, followed by activation of NF-kappa-B and MAP kinase p38 pathways. Deubiquitinated at Lys-125 by USP15, inhibiting CARD9.

Its subcellular location is the cytoplasm. Its activity is regulated as follows. Maintained in an autoinhibited state via homodimerization in which the CARD domain forms an extensive interaction with the adjacent linker and coiled-coil regions. Activation downstream of C-type lectin receptors, by phosphorylation by PRKCD and/or ubiquitination by TRIM62, triggers disruption of the CARD domain-coiled coil interface, CARD9 homooligomerization and BCL10 recruitment, followed by activation of NF-kappa-B and MAP kinase p38 pathways. Zinc-binding inhibits activation by stabilizing the CARD ground-state conformation and restricting its capacity to form BCL10-nucleating filaments. Adapter protein that plays a key role in innate immune response against fungi by forming signaling complexes downstream of C-type lectin receptors. CARD9-mediated signals are essential for antifungal immunity against a subset of fungi from the phylum Ascomycota. Transduces signals in myeloid cells downstream of C-type lectin receptors CLEC7A (dectin-1), CLEC6A (dectin-2) and CLEC4E (Mincle), which detect pathogen-associated molecular pattern metabolites (PAMPs), such as fungal carbohydrates, and trigger CARD9 activation. Upon activation, CARD9 homooligomerizes to form a nucleating helical template that recruits BCL10 via CARD-CARD interaction, thereby promoting polymerization of BCL10 and subsequent recruitment of MALT1: this leads to activation of NF-kappa-B and MAP kinase p38 (MAPK11, MAPK12, MAPK13 and/or MAPK14) pathways which stimulate expression of genes encoding pro-inflammatory cytokines and chemokines. CARD9 signaling in antigen-presenting cells links innate sensing of fungi to the activation of adaptive immunity and provides a cytokine milieu that induces the development and subsequent of interleukin 17-producing T helper (Th17) cells. Also involved in activation of myeloid cells via classical ITAM-associated receptors and TLR: required for TLR-mediated activation of MAPK, while it is not required for TLR-induced activation of NF-kappa-B. CARD9 can also be engaged independently of BCL10: forms a complex with RASGRF1 downstream of C-type lectin receptors, which recruits and activates HRAS, leading to ERK activation and the production of cytokines. Acts as an important regulator of the intestinal commensal fungi (mycobiota) component of the gut microbiota. Plays an essential role in antifungal immunity against dissemination of gut fungi: acts by promoting induction of antifungal IgG antibodies response in CX3CR1(+) macrophages to confer protection against disseminated C.albicans or C.auris infection. Also mediates immunity against other pathogens, such as certain bacteria, viruses and parasites; CARD9 signaling is however redundant with other innate immune responses. In response to L.monocytogenes infection, required for the production of inflammatory cytokines activated by intracellular peptidoglycan: acts by connecting NOD2 recognition of peptidoglycan to downstream activation of MAP kinases (MAPK) without activating NF-kappa-B. This Rattus norvegicus (Rat) protein is Caspase recruitment domain-containing protein 9.